Consider the following 564-residue polypeptide: ATP-dependent RNA helicase ROK1 (564 aa).

Disordered stretches follow at residues 1-25 (MDIF…KAAD) and 62-87 (EDDR…DGLI). Basic and acidic residues-rich tracts occupy residues 13–23 (VKKESGPKAKA) and 62–86 (EDDR…DDGL). Positions 122–150 (DLISRFSFDRRLLNNLIENGFTEPTPIQC) match the Q motif motif. In terms of domain architecture, Helicase ATP-binding spans 153–333 (IPVALNNRDV…QSIMMDPVRV (181 aa)). An ATP-binding site is contributed by 166–173 (GPTGSGKT). The DEAD box motif lies at 280–283 (DEAD). The region spanning 344–506 (NIEQKLIFCG…EVSEWMDKMA (163 aa)) is the Helicase C-terminal domain. The disordered stretch occupies residues 512-564 (EKESIKNGKAHKERKQITTVPKMDKAKRRRQQEMIAASKRRKNEELSKKHFSK). Residues 553–564 (KNEELSKKHFSK) are compositionally biased toward basic and acidic residues.

Belongs to the DEAD box helicase family. DDX52/ROK1 subfamily. Interacts with the U3 snoRNA and is associated with the 90S and 40S pre-ribosomes. This association requires the presence of RRP5. Also interacts with OSH3.

The protein localises to the nucleus. The protein resides in the nucleolus. It catalyses the reaction ATP + H2O = ADP + phosphate + H(+). In terms of biological role, ATP-dependent RNA helicase involved in 40S ribosomal subunit biogenesis. Required for the processing and cleavage of 35S pre-rRNA at sites A0, A1, and A2, leading to mature 18S rRNA. The chain is ATP-dependent RNA helicase ROK1 (ROK1) from Saccharomyces cerevisiae (strain YJM789) (Baker's yeast).